A 408-amino-acid polypeptide reads, in one-letter code: Dual-specificity RNA methyltransferase RlmN (408 aa).

Residue Glu-126 is the Proton acceptor of the active site. A Radical SAM core domain is found at 132-373 (EEGRGTLCLS…NQAGYASPIR (242 aa)). Cys-139 and Cys-384 are joined by a disulfide. [4Fe-4S] cluster is bound by residues Cys-146, Cys-150, and Cys-153. S-adenosyl-L-methionine is bound by residues 210–211 (GE), Ser-242, 264–266 (SLH), and Asn-341. Catalysis depends on Cys-384, which acts as the S-methylcysteine intermediate.

This sequence belongs to the radical SAM superfamily. RlmN family. The cofactor is [4Fe-4S] cluster.

The protein resides in the cytoplasm. It carries out the reaction adenosine(2503) in 23S rRNA + 2 reduced [2Fe-2S]-[ferredoxin] + 2 S-adenosyl-L-methionine = 2-methyladenosine(2503) in 23S rRNA + 5'-deoxyadenosine + L-methionine + 2 oxidized [2Fe-2S]-[ferredoxin] + S-adenosyl-L-homocysteine. The enzyme catalyses adenosine(37) in tRNA + 2 reduced [2Fe-2S]-[ferredoxin] + 2 S-adenosyl-L-methionine = 2-methyladenosine(37) in tRNA + 5'-deoxyadenosine + L-methionine + 2 oxidized [2Fe-2S]-[ferredoxin] + S-adenosyl-L-homocysteine. Functionally, specifically methylates position 2 of adenine 2503 in 23S rRNA and position 2 of adenine 37 in tRNAs. m2A2503 modification seems to play a crucial role in the proofreading step occurring at the peptidyl transferase center and thus would serve to optimize ribosomal fidelity. The polypeptide is Dual-specificity RNA methyltransferase RlmN (Bartonella tribocorum (strain CIP 105476 / IBS 506)).